A 342-amino-acid chain; its full sequence is Polygalacturonase inhibitor 2 (342 aa).

The signal sequence occupies residues 1-29; that stretch reads MTQFNIPVTMSSSLSIILVILVSLSTAHS. 2 cysteine pairs are disulfide-bonded: Cys-32/Cys-62 and Cys-63/Cys-72. Asn-64 carries an N-linked (GlcNAc...) (complex) asparagine glycan. LRR repeat units lie at residues 82–107, 108–132, 133–156, 157–180, 181–205, 206–228, 229–252, 253–275, 276–299, and 300–319; these read NNLDLSGLNLPKPYPIPSSLANLPYL, NFLYIGGINNLVGPIPPAIAKLTQL, HYLYITHTNVSGAIPDFLSQIKTL, VTLDFSYNALSGTLPPSISSLPNL, VGITFDGNRISGAIPDSYGSFSKLF, TSMTISRNRLTGKIPPTFANLNL, AFVDLSRNMLEGDASVLFGSDKNT, QKIHLAKNSLAFDLGKVGLSKNL, NGLDLRNNRIYGTLPQGLTQLKFL, and HSLNVSFNNLCGEIPQGGNL. The N-linked (GlcNAc...) (complex) asparagine glycan is linked to Asn-141. An N-linked (GlcNAc...) asparagine glycan is attached at Asn-303. 2 disulfides stabilise this stretch: Cys-310/Cys-332 and Cys-334/Cys-341.

Belongs to the polygalacturonase-inhibiting protein family. Post-translationally, asn-303 is not glycosylated.

Its subcellular location is the secreted. The protein resides in the cell wall. It localises to the membrane. Inhibitor of fungal polygalacturonase. It is an important factor for plant resistance to phytopathogenic fungi. Inhibits all polygalacturonases (PG) tested, with the exception of PG from F.oxysporum which was only inhibited at 60%. This is Polygalacturonase inhibitor 2 (PGIP2) from Phaseolus vulgaris (Kidney bean).